The primary structure comprises 256 residues: Nuclear shuttle protein (256 aa).

A Bipartite nuclear localization signal motif is present at residues 21–42; it reads YQGFRRTAIVTRHDGKRRQHQS. The Nuclear localization signal signature appears at 81 to 96; sequence QLGKIEPNRCRSYIKL. Positions 150 to 187 are interaction with Arabidopsis thaliana NSI protein; sequence ELFGARINSHGNLAVMPSLKDRFYIRHLLKRVLSVDKD.

Belongs to the begomovirus nuclear shuttle protein family. In terms of assembly, binds to single-stranded and double-stranded viral DNA. Interacts with the host nuclear shuttle interacting (NSI) protein. This interaction may allow NSP to recruit NSI monomers to the viral genome and thus regulate nuclear export of viral genome by NSP.

Its subcellular location is the host nucleus. The protein localises to the host cytoplasm. The protein resides in the host cell membrane. Functionally, binds to the genomic viral ssDNA, shuttles it into and out of the cell nucleus. Begomoviruses use 2 proteins to transport their DNA from cell to cell. The nuclear shuttle protein (NSP) shuttles it between nucleus and cytoplasm and the movement protein (MP) probably transports the DNA-NSP complex to the cell periphery and facilitates movement across the cell wall. This chain is Nuclear shuttle protein, found in Macroptilium lathyroides (Lima bean).